The chain runs to 1941 residues: Diacylglycerol kinase eta (1941 aa).

Residues 93–186 (SIIKEGYLLK…WLGSLKAATA (94 aa)) enclose the PH domain. 2 consecutive Phorbol-ester/DAG-type zinc fingers follow at residues 206–256 (HHHW…IANC) and 279–330 (PHQW…AIAC). Positions 361–497 (GNFSPLLVFV…DRWSIMVFEK (137 aa)) constitute a DAGKc domain. 4 disordered regions span residues 1030–1068 (TTTL…SPPR), 1132–1164 (CNSN…ETPT), 1215–1257 (LESA…PSSS), and 1276–1295 (RRHS…KDKD). The span at 1133–1155 (NSNNNSNNNSNSNSNNNNHNDGN) shows a compositional bias: low complexity. In terms of domain architecture, SAM spans 1878 to 1941 (WSVNEVVTWL…LQAIKDLSEN (64 aa)).

This sequence belongs to the eukaryotic diacylglycerol kinase family.

It is found in the cytoplasm. The enzyme catalyses a 1,2-diacyl-sn-glycerol + ATP = a 1,2-diacyl-sn-glycero-3-phosphate + ADP + H(+). Functionally, phosphorylates diacylglycerol (DAG) to generate phosphatidic acid (PA). The chain is Diacylglycerol kinase eta from Drosophila grimshawi (Hawaiian fruit fly).